The primary structure comprises 60 residues: Potassium channel toxin alpha-KTx 12.5 (60 aa).

The N-terminal stretch at M1–C22 is a signal peptide. Cystine bridges form between C30-C51, C36-C56, and C40-C58.

It belongs to the short scorpion toxin superfamily. Potassium channel inhibitor family. Alpha-KTx 12 subfamily. Expressed by the venom gland.

The protein localises to the secreted. This recombinant toxin inhibits the mammalian voltage-gated potassium channels Kv1.3/KCNA3 (IC(50)=28 nM). Kv1.1/KCNA1 and Kv1.2/KCNA2 potassium channels are also weakly inhibited (IC(50)=1.73 uM and IC(50)=12.63 uM, respectively). In Lychas mucronatus (Chinese swimming scorpion), this protein is Potassium channel toxin alpha-KTx 12.5.